The primary structure comprises 210 residues: 7-carboxy-7-deazaguanine synthase (210 aa).

Residues 12–14 (LQG) and R27 each bind substrate. Positions 18–210 (HAGRASVFCR…VQTHKSLGIR (193 aa)) constitute a Radical SAM core domain. C31, C46, and C49 together coordinate [4Fe-4S] cluster. T51 contacts Mg(2+). T90 is a binding site for substrate. Residues G92, 133 to 135 (SPK), and 173 to 176 (QPMD) each bind S-adenosyl-L-methionine.

The protein belongs to the radical SAM superfamily. 7-carboxy-7-deazaguanine synthase family. As to quaternary structure, homodimer. [4Fe-4S] cluster is required as a cofactor. It depends on S-adenosyl-L-methionine as a cofactor. Requires Mg(2+) as cofactor.

The catalysed reaction is 6-carboxy-5,6,7,8-tetrahydropterin + H(+) = 7-carboxy-7-deazaguanine + NH4(+). Its pathway is purine metabolism; 7-cyano-7-deazaguanine biosynthesis. Catalyzes the complex heterocyclic radical-mediated conversion of 6-carboxy-5,6,7,8-tetrahydropterin (CPH4) to 7-carboxy-7-deazaguanine (CDG), a step common to the biosynthetic pathways of all 7-deazapurine-containing compounds. The sequence is that of 7-carboxy-7-deazaguanine synthase from Bradyrhizobium diazoefficiens (strain JCM 10833 / BCRC 13528 / IAM 13628 / NBRC 14792 / USDA 110).